The sequence spans 296 residues: Glucokinase (296 aa).

Belongs to the ROK (NagC/XylR) family. Homodimer. Requires a divalent metal cation as cofactor.

It catalyses the reaction D-glucose + ATP = D-glucose 6-phosphate + ADP + H(+). Its function is as follows. Catalyzes the phosphorylation of D-glucose to D-glucose 6-phosphate using ATP as the phosphate donor. Has a broad hexose specificity, and in addition to glucose, which shows the highest catalytic efficiency, it can also phosphorylate fructose, mannose, galactose and sorbitol. Can also use CTP, GTP or UTP as phosphoryl donor. The protein is Glucokinase of Pyrobaculum calidifontis (strain DSM 21063 / JCM 11548 / VA1).